The following is a 413-amino-acid chain: Floricaula/leafy homolog 1 (413 aa).

2 disordered regions span residues 154 to 177 (EGLSEEPVQQQEREAVGSGGGGTT) and 191 to 239 (QRRR…RQRE). Positions 201–210 (GRERRGRASA) are enriched in basic and acidic residues. Positions 211 to 225 (EEDEETEEGQEDEWN) are enriched in acidic residues. DNA-binding regions lie at residues 238-242 (REHPF), 307-314 (NKPKMRHY), and 378-381 (YVPT).

This sequence belongs to the FLO/LFY family. As to expression, expressed in floral meristems and in indeterminate vegetative meristems.

Its subcellular location is the nucleus. Its function is as follows. Probable transcription factor that act to specify determinacy in the progenitor cells for both flowers and leaves. The sequence is that of Floricaula/leafy homolog 1 (FL1) from Nicotiana tabacum (Common tobacco).